We begin with the raw amino-acid sequence, 196 residues long: DnaA initiator-associating protein DiaA (196 aa).

One can recognise an SIS domain in the interval 34 to 196 (VVQSLLNGNK…DNTLFPHQEV (163 aa)).

Belongs to the SIS family. DiaA subfamily. In terms of assembly, homotetramer; dimer of dimers.

Functionally, required for the timely initiation of chromosomal replication via direct interactions with the DnaA initiator protein. This is DnaA initiator-associating protein DiaA from Erwinia tasmaniensis (strain DSM 17950 / CFBP 7177 / CIP 109463 / NCPPB 4357 / Et1/99).